The primary structure comprises 152 residues: Transcriptional regulator MraZ (152 aa).

2 SpoVT-AbrB domains span residues 5–52 and 81–124; these read HSNR…PMPE and ATEV…DQGR.

It belongs to the MraZ family. Forms oligomers.

Its subcellular location is the cytoplasm. The protein resides in the nucleoid. In Solidesulfovibrio magneticus (strain ATCC 700980 / DSM 13731 / RS-1) (Desulfovibrio magneticus), this protein is Transcriptional regulator MraZ.